A 349-amino-acid polypeptide reads, in one-letter code: MDNEKLKAIDAAMSQIEKQFGKGAIMKLGEQDILNIDAISTGCLSLDIALGIGGVPRGRVVEIYGPESSGKTTVALHILAEAQKKGGAAAFIDAEHALDPQYARALGVDIDNLVVSQPDTGEQALEIAEALVRSGAIDVIVVDSVAALVPKAEIEGEMGDSHVGLQARLMSQALRKLTGSINKSKCIAIFINQLREKVGIMFGNPETTPGGRALKFYASVRMDIRKIDTIKQGEEMIGNRVRVKVVKNKVAPPFKQAEFDIMYNEGISREGNIVDVGVKENIIQKSGAWFSYGDIRLGQGRENAKLFFKENIDIRSEVENKIREKYDLPIQKVKNEKPKIEKGTENNTK.

Residue 65–72 participates in ATP binding; sequence GPESSGKT.

It belongs to the RecA family.

It is found in the cytoplasm. Its function is as follows. Can catalyze the hydrolysis of ATP in the presence of single-stranded DNA, the ATP-dependent uptake of single-stranded DNA by duplex DNA, and the ATP-dependent hybridization of homologous single-stranded DNAs. It interacts with LexA causing its activation and leading to its autocatalytic cleavage. The protein is Protein RecA of Clostridium acetobutylicum (strain ATCC 824 / DSM 792 / JCM 1419 / IAM 19013 / LMG 5710 / NBRC 13948 / NRRL B-527 / VKM B-1787 / 2291 / W).